Reading from the N-terminus, the 430-residue chain is Probable carboxypeptidase AO090003000058 (430 aa).

Positions 1–16 are cleaved as a signal peptide; that stretch reads MKSIYSLVLCTALTAA. Asparagine 84 is a glycosylation site (N-linked (GlcNAc...) asparagine). Aspartate 156 is a Zn(2+) binding site. Residue glutamate 188 is the Proton acceptor of the active site. A Zn(2+)-binding site is contributed by glutamate 189. Asparagine 285 carries an N-linked (GlcNAc...) asparagine glycan.

This sequence belongs to the peptidase M20A family. The cofactor is Zn(2+).

Its subcellular location is the secreted. The chain is Probable carboxypeptidase AO090003000058 from Aspergillus oryzae (strain ATCC 42149 / RIB 40) (Yellow koji mold).